We begin with the raw amino-acid sequence, 345 residues long: Protein CHROMOSOME TRANSMISSION FIDELITY 7 (345 aa).

The CCHH-type zinc-finger motif lies at 96–120; that stretch reads RHCAECGAKYAPGDELDEKNHQSFH.

Belongs to the acetyltransferase family. ECO subfamily. In terms of processing, autoacetylated. In terms of tissue distribution, expressed in roots, stems, leaves, young seedlings and flower buds. Detected in the embryo, but not in the endosperm.

It localises to the nucleus. The protein resides in the cytoplasm. Its function is as follows. Acetyltransferase required for the establishment of sister chromatid cohesion. Involved in preservation of genome integrity and meiosis. Required for DNA repair and for the regulation of chromosome segregation during mitotic cell division. Knock-down mutants are extremely dwarf. Regulator of sister chromatid cohesion in meiosis which negatively regulates cohesin association with chromatin, acting as an antagonist of WAPL1 and WAPL2. The protein is Protein CHROMOSOME TRANSMISSION FIDELITY 7 of Arabidopsis thaliana (Mouse-ear cress).